Reading from the N-terminus, the 187-residue chain is UPF0669 protein C6orf120 homolog (187 aa).

The first 23 residues, 1–23, serve as a signal peptide directing secretion; that stretch reads MVEYWKRNFFMVLVLQAFYLANC. N-linked (GlcNAc...) asparagine glycosylation is present at N47.

This sequence belongs to the UPF0669 family.

It is found in the secreted. This chain is UPF0669 protein C6orf120 homolog, found in Xenopus tropicalis (Western clawed frog).